Consider the following 253-residue polypeptide: Leucyl/phenylalanyl-tRNA--protein transferase (253 aa).

This sequence belongs to the L/F-transferase family.

It is found in the cytoplasm. It carries out the reaction N-terminal L-lysyl-[protein] + L-leucyl-tRNA(Leu) = N-terminal L-leucyl-L-lysyl-[protein] + tRNA(Leu) + H(+). The enzyme catalyses N-terminal L-arginyl-[protein] + L-leucyl-tRNA(Leu) = N-terminal L-leucyl-L-arginyl-[protein] + tRNA(Leu) + H(+). The catalysed reaction is L-phenylalanyl-tRNA(Phe) + an N-terminal L-alpha-aminoacyl-[protein] = an N-terminal L-phenylalanyl-L-alpha-aminoacyl-[protein] + tRNA(Phe). In terms of biological role, functions in the N-end rule pathway of protein degradation where it conjugates Leu, Phe and, less efficiently, Met from aminoacyl-tRNAs to the N-termini of proteins containing an N-terminal arginine or lysine. The protein is Leucyl/phenylalanyl-tRNA--protein transferase of Bordetella petrii (strain ATCC BAA-461 / DSM 12804 / CCUG 43448).